Consider the following 192-residue polypeptide: Peptide deformylase (192 aa).

Fe cation is bound by residues Cys108 and His150. The active site involves Glu151. Fe cation is bound at residue His154.

The protein belongs to the polypeptide deformylase family. It depends on Fe(2+) as a cofactor.

The catalysed reaction is N-terminal N-formyl-L-methionyl-[peptide] + H2O = N-terminal L-methionyl-[peptide] + formate. Functionally, removes the formyl group from the N-terminal Met of newly synthesized proteins. Requires at least a dipeptide for an efficient rate of reaction. N-terminal L-methionine is a prerequisite for activity but the enzyme has broad specificity at other positions. This is Peptide deformylase from Opitutus terrae (strain DSM 11246 / JCM 15787 / PB90-1).